The primary structure comprises 364 residues: Guanine nucleotide-binding protein alpha-8 subunit (364 aa).

Residue Gly2 is the site of N-myristoyl glycine attachment. Residue Cys5 is the site of S-palmitoyl cysteine attachment. Residues 38 to 364 form the G-alpha domain; the sequence is KILKLLILGP…QHTMQKVGIQ (327 aa). Residues 41 to 54 form a G1 motif region; it reads KLLILGPGESGKST. Residues 46–53, 186–192, 211–215, 280–283, and Ala336 contribute to the GTP site; these read GPGESGKS, LKSRVPT, DVGGQ, and NKID. Positions 53 and 192 each coordinate Mg(2+). The interval 184 to 192 is G2 motif; the sequence is DILKSRVPT. A G3 motif region spans residues 207-216; the sequence is FRIFDVGGQR. The segment at 276–283 is G4 motif; it reads ILFLNKID. The G5 motif stretch occupies residues 334 to 339; sequence TCATDT.

It belongs to the G-alpha family. G proteins are composed of 3 units; alpha, beta and gamma. The alpha chain contains the guanine nucleotide binding site.

In terms of biological role, guanine nucleotide-binding proteins (G proteins) are involved as modulators or transducers in various transmembrane signaling systems. This Caenorhabditis elegans protein is Guanine nucleotide-binding protein alpha-8 subunit (gpa-8).